The following is a 417-amino-acid chain: Odorant receptor 65a (417 aa).

Residues 1-62 lie on the Cytoplasmic side of the membrane; sequence MTELRSERKN…MNSEQRRLPR (62 aa). Residues 63-83 traverse the membrane as a helical segment; the sequence is IVAWQYFVSIQLATALASLFY. Over 84–98 the chain is Extracellular; that stretch reads GISESIGDIVNLGRD. Residues 99 to 119 traverse the membrane as a helical segment; sequence LVFIITIIFICFRLVFFAQYA. The Cytoplasmic segment spans residues 120–152; it reads GELDVIIDALEDIYHWSIKGPATKEVQETKRLH. The chain crosses the membrane as a helical span at residues 153-173; sequence FLLFMALIITWFSFLILFMLI. Residues 174–206 are Extracellular-facing; that stretch reads KISTPFWIESQTLPFHVSWPFQLHDPSKHPIAY. A helical transmembrane segment spans residues 207 to 227; it reads IIIFVSQSTTMLYFLIWLGVV. Over 228–290 the chain is Cytoplasmic; it reads ENMGVSLFFE…TDRCNHIFNG (63 aa). The chain crosses the membrane as a helical span at residues 291–311; the sequence is AFIMQMLINFLLVSLSLFEVL. Residues 312–316 lie on the Extracellular side of the membrane; sequence AAKKN. A helical membrane pass occupies residues 317–337; the sequence is PQVAVEYMIIMLMTLGHLSFW. Over 338 to 393 the chain is Cytoplasmic; sequence SKFGDMFSKESEQVALAVYEAYDPNVGSKSIHRQFCFFIQRAQKPLIMKASPFPPF. Residues 394–414 traverse the membrane as a helical segment; sequence NLENYMFILKQCYSILTILAN. Residues 415 to 417 lie on the Extracellular side of the membrane; it reads TLE.

This sequence belongs to the insect chemoreceptor superfamily. Heteromeric odorant receptor channel (TC 1.A.69) family. Or49a subfamily. As to quaternary structure, interacts with Orco. Complexes exist early in the endomembrane system in olfactory sensory neurons (OSNs), coupling these complexes to the conserved ciliary trafficking pathway. As to expression, expressed in olfactory sensory neurons in the antenna.

It is found in the cell membrane. Functionally, odorant receptor which mediates acceptance or avoidance behavior, depending on its substrates. The odorant receptor repertoire encodes a large collection of odor stimuli that vary widely in identity, intensity, and duration. May form a complex with Orco to form odorant-sensing units, providing sensitive and prolonged odorant signaling and calcium permeability. Involved in olfactory communication for modulating aggression through the sensing of the male-specific pheromone 11-cis-vaccenyl acetate (cVA). Although acute exposure to cVA elicites aggression through Or67d olfactory receptor neurons (ORNs), chronic cVA exposure reduces aggression through Or65a ORNs. Moreover, cVA leads to generalized learning with mated females. It is a major component of the male cuticular hydrocarbon profile, but it is not found on virgin females. During copulation, cVA is transferred to the female in ejaculate along with sperm and peptides that decrease her sexual receptivity. The chain is Odorant receptor 65a (Or65a) from Drosophila melanogaster (Fruit fly).